Consider the following 177-residue polypeptide: tRNA (cytidine(56)-2'-O)-methyltransferase (177 aa).

S-adenosyl-L-methionine-binding positions include L84 and 109–113; that span reads GAEKV.

This sequence belongs to the aTrm56 family. Homodimer.

The protein resides in the cytoplasm. The catalysed reaction is cytidine(56) in tRNA + S-adenosyl-L-methionine = 2'-O-methylcytidine(56) in tRNA + S-adenosyl-L-homocysteine + H(+). In terms of biological role, specifically catalyzes the AdoMet-dependent 2'-O-ribose methylation of cytidine at position 56 in tRNAs. In Methanosarcina barkeri (strain Fusaro / DSM 804), this protein is tRNA (cytidine(56)-2'-O)-methyltransferase.